Reading from the N-terminus, the 254-residue chain is Pyrroloquinoline-quinone synthase (254 aa).

This sequence belongs to the PqqC family.

The enzyme catalyses 6-(2-amino-2-carboxyethyl)-7,8-dioxo-1,2,3,4,7,8-hexahydroquinoline-2,4-dicarboxylate + 3 O2 = pyrroloquinoline quinone + 2 H2O2 + 2 H2O + H(+). It participates in cofactor biosynthesis; pyrroloquinoline quinone biosynthesis. Ring cyclization and eight-electron oxidation of 3a-(2-amino-2-carboxyethyl)-4,5-dioxo-4,5,6,7,8,9-hexahydroquinoline-7,9-dicarboxylic-acid to PQQ. The chain is Pyrroloquinoline-quinone synthase from Rhodopseudomonas palustris (strain TIE-1).